The chain runs to 301 residues: Putative S-adenosyl-L-methionine-dependent methyltransferase MUL_0450 (301 aa).

S-adenosyl-L-methionine-binding positions include Asp-127 and 156-157 (DL).

It belongs to the UPF0677 family.

In terms of biological role, exhibits S-adenosyl-L-methionine-dependent methyltransferase activity. This Mycobacterium ulcerans (strain Agy99) protein is Putative S-adenosyl-L-methionine-dependent methyltransferase MUL_0450.